Consider the following 225-residue polypeptide: uncharacterized protein (225 aa).

Positions 1–19 (MKFNSISPNKQHHTGFTTS) are enriched in polar residues. A disordered region spans residues 1 to 21 (MKFNSISPNKQHHTGFTTSNN).

This is an uncharacterized protein from Dictyostelium discoideum (Social amoeba).